The chain runs to 185 residues: Peptidyl-tRNA hydrolase (185 aa).

Residue Y14 coordinates tRNA. H19 serves as the catalytic Proton acceptor. Positions 65, 67, and 113 each coordinate tRNA.

This sequence belongs to the PTH family. As to quaternary structure, monomer.

The protein resides in the cytoplasm. It catalyses the reaction an N-acyl-L-alpha-aminoacyl-tRNA + H2O = an N-acyl-L-amino acid + a tRNA + H(+). In terms of biological role, hydrolyzes ribosome-free peptidyl-tRNAs (with 1 or more amino acids incorporated), which drop off the ribosome during protein synthesis, or as a result of ribosome stalling. Catalyzes the release of premature peptidyl moieties from peptidyl-tRNA molecules trapped in stalled 50S ribosomal subunits, and thus maintains levels of free tRNAs and 50S ribosomes. The sequence is that of Peptidyl-tRNA hydrolase from Rickettsia bellii (strain OSU 85-389).